Consider the following 304-residue polypeptide: 5-hmdU DNA kinase 2 (304 aa).

The interval 260 to 304 is disordered; the sequence is VGGQDPLAHRVPEKPQKASKTKNKAVAKEEPKTSSVSLLGLMRKA. The segment covering 266–275 has biased composition (basic and acidic residues); the sequence is LAHRVPEKPQ.

It belongs to the thymidylate kinase family. 5-hmdU DNA kinase subfamily.

The enzyme catalyses 5-hydroxymethyl-dUMP in DNA + ATP = 5-phosphomethyl-dUMP in DNA + ADP + H(+). Its function is as follows. Phosphorylates 5-hydroxymethyluracil (5hmdU) into 5-phosphomethyl-2'-deoxyuridine (5- PmdU) on DNA as a step in the pathway leading to thymidine hypermodifications in the viral genome. The phosphate is added internally to the DNA polymer. As a final result of the pathway of hypermodification, 5-aminoethoxy-2'-deoxymethyluridine (5-NeOmdU) substitutes for about 40% of the thymidines in the viral DNA. These modifications probably prevent degradation of viral genome by the host restriction-modification antiviral defense system. The polypeptide is 5-hmdU DNA kinase 2 (Salmonella typhi).